Here is a 434-residue protein sequence, read N- to C-terminus: Nicotinate phosphoribosyltransferase (434 aa).

The residue at position 242 (His-242) is a Phosphohistidine; by autocatalysis.

Belongs to the NAPRTase family. Transiently phosphorylated on a His residue during the reaction cycle. Phosphorylation strongly increases the affinity for substrates and increases the rate of nicotinate D-ribonucleotide production. Dephosphorylation regenerates the low-affinity form of the enzyme, leading to product release.

It carries out the reaction nicotinate + 5-phospho-alpha-D-ribose 1-diphosphate + ATP + H2O = nicotinate beta-D-ribonucleotide + ADP + phosphate + diphosphate. Its pathway is cofactor biosynthesis; NAD(+) biosynthesis; nicotinate D-ribonucleotide from nicotinate: step 1/1. Functionally, catalyzes the synthesis of beta-nicotinate D-ribonucleotide from nicotinate and 5-phospho-D-ribose 1-phosphate at the expense of ATP. The protein is Nicotinate phosphoribosyltransferase of Brucella canis (strain ATCC 23365 / NCTC 10854 / RM-666).